The primary structure comprises 501 residues: Putative BTB/POZ domain-containing protein L107 (501 aa).

Positions 16–87 constitute a BTB domain; that stretch reads TDLELTLVDS…FYITDIERSQ (72 aa).

Belongs to the mimivirus BTB/WD family.

The polypeptide is Putative BTB/POZ domain-containing protein L107 (Acanthamoeba polyphaga mimivirus (APMV)).